A 598-amino-acid polypeptide reads, in one-letter code: Fibulin-1 (598 aa).

31 cysteine pairs are disulfide-bonded: Ala1–Cys25, Cys7–Cys26, Cys28–Cys52, Cys29–Cys59, Cys42–Cys60, Cys96–Cys106, Cys102–Cys115, Cys117–Cys130, Cys136–Cys149, Cys143–Cys158, Cys164–Cys176, Cys182–Cys195, Cys189–Cys204, Cys210–Cys222, Cys228–Cys242, Cys257–Cys270, Cys275–Cys288, Cys282–Cys297, Cys299–Cys312, Cys318–Cys330, Cys326–Cys339, Cys341–Cys354, Cys360–Cys369, Cys365–Cys378, Cys380–Cys394, Cys400–Cys413, Cys409–Cys422, Cys424–Cys438, Cys444–Cys457, Cys451–Cys466, and Cys471–Cys483. Anaphylatoxin-like domains lie at 1-27 (ANEQ…RCCH) and 28-60 (CCLL…RACC). N-linked (GlcNAc...) asparagine glycosylation is present at Asn14. Residues 92–131 (LNDRCRGGGPCKQQCRDTGDEVVCSCFVGYQLLSDGVSCE) enclose the EGF-like 1 domain. The region spanning 132–177 (DVNECITGSHSCRLGESCINTVGSFRCQRDSSCGTGYELTEDNSCK) is the EGF-like 2; calcium-binding domain. Residues 178–223 (DIDQCESGIHNCLPDFICQNTLGSFRCRPKLQCKNGFIQDALANCI) form the EGF-like 3; calcium-binding domain. Residues 224-270 (DINECLSIVSAPCPTGHTCINTEGSYTQKNVPNCGRGYHLNEEGTRC) form the EGF-like 4; calcium-binding domain. The 43-residue stretch at 271–313 (DVNECAPPAEPCGKGHRCVNSPGSFRCECKTGYYFDGISRMCV) folds into the EGF-like 5; calcium-binding domain. Positions 271 to 355 (DVNECAPPAE…RLSVDGRSCE (85 aa)) are self-association and FN1-binding. The EGF-like 6; calcium-binding domain occupies 314–355 (DVNECQRYPGRLCGHKCENTLGSYVCSCSVGFRLSVDGRSCE). One can recognise an EGF-like 7; calcium-binding domain in the interval 356-395 (DINECSSSPCSQECANVYGSYQCYCRRGYQLSDVDGVTCE). The EGF-like 8; calcium-binding domain occupies 396 to 439 (DIDECALPTGGHICSYRCINIPGSFQCSCPASGYRLAPNGRNCQ). Residues 440 to 484 (DIDECVTGIHNCSINETCFNIQGGFRCLAFECPENYRRSAATRCE) form the EGF-like 9; calcium-binding domain. 2 N-linked (GlcNAc...) asparagine glycosylation sites follow: Asn450 and Asn454.

It belongs to the fibulin family. Homomultimerizes and interacts with various extracellular matrix components. Interacts with FBLN7. Interacts with the mature/soluble form of DTR. Interacts with CCN3.

The protein localises to the secreted. It is found in the extracellular space. It localises to the extracellular matrix. Incorporated into fibronectin-containing matrix fibers. May play a role in cell adhesion and migration along protein fibers within the extracellular matrix (ECM). Could be important for certain developmental processes and contribute to the supramolecular organization of ECM architecture, in particular to those of basement membranes. May serve to anchor the mature/soluble form of DTR to its fibers as it migrates through the extracellular matrix. The direct physical association with DTR may be useful in such tissue developmental processes as wound healing. In Chlorocebus aethiops (Green monkey), this protein is Fibulin-1 (FBLN1).